We begin with the raw amino-acid sequence, 212 residues long: General odorant-binding protein 68 (212 aa).

Positions 1 to 28 (MATTIARIGSANWAKLLVLLWLVQLATA) are cleaved as a signal peptide. 3 disulfide bridges follow: Cys-64-Cys-85, Cys-80-Cys-152, and Cys-130-Cys-162.

This sequence belongs to the PBP/GOBP family.

It is found in the secreted. Present in the aqueous fluid surrounding olfactory sensory dendrites and are thought to aid in the capture and transport of hydrophobic odorants into and through this fluid. The polypeptide is General odorant-binding protein 68 (Obp68) (Anopheles gambiae (African malaria mosquito)).